Reading from the N-terminus, the 136-residue chain is Large ribosomal subunit protein uL22 (136 aa).

This sequence belongs to the universal ribosomal protein uL22 family. As to quaternary structure, part of the 50S ribosomal subunit.

This protein binds specifically to 23S rRNA; its binding is stimulated by other ribosomal proteins, e.g. L4, L17, and L20. It is important during the early stages of 50S assembly. It makes multiple contacts with different domains of the 23S rRNA in the assembled 50S subunit and ribosome. In terms of biological role, the globular domain of the protein is located near the polypeptide exit tunnel on the outside of the subunit, while an extended beta-hairpin is found that lines the wall of the exit tunnel in the center of the 70S ribosome. This is Large ribosomal subunit protein uL22 from Parabacteroides distasonis (strain ATCC 8503 / DSM 20701 / CIP 104284 / JCM 5825 / NCTC 11152).